Here is a 184-residue protein sequence, read N- to C-terminus: TRAF-interacting protein with FHA domain-containing protein A (184 aa).

Phosphothreonine; by ALPK1 is present on threonine 9. An FHA domain is found at 47–103; the sequence is VKFGRNSNICHYTFQDKQVSRVQFSLQLFKKFNSSVLSFEIKNMSKKTNLIVDSREL. The segment at 165-184 is disordered; that stretch reads TYSLCSSQSSSPTEMDENES. The segment covering 167 to 177 has biased composition (polar residues); sequence SLCSSQSSSPT.

It belongs to the TIFA family. Homooligomer; homooligomerizes following phosphorylation at Thr-9. Interacts with IRAK1, TRAF2 and TRAF6. Interacts with TIFAB; binding to TIFAB inhibits TRAF6 activation, possibly by inducing a conformational change in TIFA. Interacts with ZCCHC11; binding to ZCCHC11 suppresses the TRAF6-dependent activation of NF-kappa-B. Phosphorylated at Thr-9 following detection of ADP-D-glycero-beta-D-manno-heptose (ADP-Heptose) by ALPK1. Phosphorylation at Thr-9 by ALPK1 leads to the formation of an intermolecular binding between the FHA domain and phosphorylated Thr-9, promoting TIFA oligomerization and TIFA-mediated NF-kappa-B activation.

The protein resides in the cytoplasm. Adapter molecule that plays a key role in the activation of pro-inflammatory NF-kappa-B signaling following detection of bacterial pathogen-associated molecular pattern metabolites (PAMPs). Promotes activation of an innate immune response by inducing the oligomerization and polyubiquitination of TRAF6, which leads to the activation of TAK1 and IKK through a proteasome-independent mechanism. TIFA-dependent innate immune response is triggered by ADP-D-glycero-beta-D-manno-heptose (ADP-Heptose), a potent PAMP present in all Gram-negative and some Gram-positive bacteria: ADP-Heptose is recognized by ALPK1, which phosphorylates TIFA at Thr-9, leading to TIFA homooligomerization and subsequent activation of pro-inflammatory NF-kappa-B signaling. The chain is TRAF-interacting protein with FHA domain-containing protein A from Homo sapiens (Human).